Reading from the N-terminus, the 205-residue chain is Methylamine utilization protein MauD (205 aa).

The chain crosses the membrane as a helical span at residues 5-25; it reads FLIASNVLLWLALIGCAVLML. A Thioredoxin domain is found at 50-184; sequence PDVGDAAPTF…LESLLEADKS (135 aa).

It localises to the membrane. The protein operates within one-carbon metabolism; methylamine degradation. In terms of biological role, may be specifically involved in the processing, transport, and/or maturation of the MADH beta-subunit. This chain is Methylamine utilization protein MauD (mauD), found in Methylorubrum extorquens (strain ATCC 14718 / DSM 1338 / JCM 2805 / NCIMB 9133 / AM1) (Methylobacterium extorquens).